We begin with the raw amino-acid sequence, 72 residues long: Sec-independent protein translocase protein TatA (72 aa).

A helical transmembrane segment spans residues 1–21; it reads MPFGLGLPEILVIGVIALLIF. The segment at 41 to 72 is disordered; sequence KSGVSDEPAPQQSASKETAPNPPQSLPSGKDS.

The protein belongs to the TatA/E family. As to quaternary structure, forms a complex with TatC.

Its subcellular location is the cell inner membrane. Part of the twin-arginine translocation (Tat) system that transports large folded proteins containing a characteristic twin-arginine motif in their signal peptide across membranes. TatA could form the protein-conducting channel of the Tat system. The sequence is that of Sec-independent protein translocase protein TatA from Gloeobacter violaceus (strain ATCC 29082 / PCC 7421).